A 735-amino-acid chain; its full sequence is Serine/threonine-protein kinase BRSK2 (735 aa).

The 252-residue stretch at 20 to 271 (YRLEKTLGKG…LEHIQKHIWY (252 aa)) folds into the Protein kinase domain. ATP-binding positions include 26–34 (LGKGQTGLV) and K49. Residue D142 is the Proton acceptor of the active site. T175 bears the Phosphothreonine; by LKB1 mark. At T261 the chain carries Phosphothreonine; by PKA. A Phosphoserine modification is found at S295. The region spanning 298-340 (DIDPDVLDSMHSLGCFRDRNKLLQDLLSEEENQEKMIYFLLLD) is the UBA domain. The segment covering 346–367 (PSHEDEDLPPRNEIDPPRKRVD) has biased composition (basic and acidic residues). 2 disordered regions span residues 346-476 (PSHE…GVPW) and 492-516 (RFHR…SSPE). Residues S368, S383, S394, S413, S424, and S428 each carry the phosphoserine modification. Low complexity predominate over residues 411–429 (SRSISGASSGLSTSPLSSP). The segment covering 432-446 (TPHPSPRGSPLPTPK) has biased composition (pro residues). S456 is subject to Phosphoserine. Residues T460, T464, and T510 each carry the phosphothreonine modification. 3 positions are modified to phosphoserine: S513, S514, and S521. Positions 604–606 (KEN) match the KEN box motif. A disordered region spans residues 682-735 (KNGQAAQAPSTPAKRSAHGPLGDSAAAGPGGDTEYPMGKDMAKMGPPAARREQP).

It belongs to the protein kinase superfamily. CAMK Ser/Thr protein kinase family. SNF1 subfamily. In terms of assembly, interacts with FZR1, a regulatory subunit of the APC ubiquitin ligase complex. Interacts with COPS5. Interacts with PAK1. The cofactor is Mg(2+). May be phosphorylated at Thr-261 by PKA. Phosphorylated at Thr-175 by STK11/LKB1 in complex with STE20-related adapter-alpha (STRADA) pseudo kinase and CAB39. Not phosphorylated at Thr-175 by CaMKK2. In contrast, it is phosphorylated and activated by CaMKK1. May be inactivated via dephosphorylation of Thr-175 by PP2C. In terms of processing, polyubiquitinated by the APC complex in conjunction with FZR1, leading to its proteasomal degradation. Targeted for proteasomal degradation by interaction with COPS5. BRSK2 levels change during the cell cycle. BRSK2 levels are low at the G1/S boundary and gradually increase as cells progress into G2 phase. BRSK2 levels decrease rapidly at the end of mitosis. In terms of tissue distribution, detected in pancreas islets and in brain (at protein level). Detected in brain and pancreas.

It localises to the cytoplasm. The protein resides in the cytoskeleton. The protein localises to the microtubule organizing center. It is found in the centrosome. Its subcellular location is the perinuclear region. It localises to the endoplasmic reticulum. It carries out the reaction L-seryl-[protein] + ATP = O-phospho-L-seryl-[protein] + ADP + H(+). It catalyses the reaction L-threonyl-[protein] + ATP = O-phospho-L-threonyl-[protein] + ADP + H(+). The catalysed reaction is L-seryl-[tau protein] + ATP = O-phospho-L-seryl-[tau protein] + ADP + H(+). The enzyme catalyses L-threonyl-[tau protein] + ATP = O-phospho-L-threonyl-[tau protein] + ADP + H(+). With respect to regulation, activated by phosphorylation on Thr-175 by STK11/LKB1. In terms of biological role, serine/threonine-protein kinase that plays a key role in polarization of neurons and axonogenesis, cell cycle progress and insulin secretion. Phosphorylates CDK16, CDC25C, MAPT/TAU, PAK1 and WEE1. Following phosphorylation and activation by STK11/LKB1, acts as a key regulator of polarization of cortical neurons, probably by mediating phosphorylation of microtubule-associated proteins such as MAPT/TAU at 'Thr-504' and 'Ser-554'. Also regulates neuron polarization by mediating phosphorylation of WEE1 at 'Ser-642' in post-mitotic neurons, leading to down-regulate WEE1 activity in polarized neurons. Plays a role in the regulation of the mitotic cell cycle progress and the onset of mitosis. Plays a role in the regulation of insulin secretion in response to elevated glucose levels, probably via phosphorylation of CDK16 and PAK1. While BRSK2 phosphorylated at Thr-175 can inhibit insulin secretion, BRSK2 phosphorylated at Thr-261 can promote insulin secretion. Regulates reorganization of the actin cytoskeleton. May play a role in the apoptotic response triggered by endoplasmic reticulum (ER) stress. This chain is Serine/threonine-protein kinase BRSK2 (Brsk2), found in Mus musculus (Mouse).